The chain runs to 533 residues: CTP synthase (533 aa).

Positions 1 to 270 (MVHLAKYIVV…GDYIVRRIEL (270 aa)) are amidoligase domain. S16 provides a ligand contact to CTP. UTP is bound at residue S16. 17–22 (SIGKGI) contacts ATP. Residue Y57 participates in L-glutamine binding. D74 serves as a coordination point for ATP. Mg(2+) is bound by residues D74 and E144. CTP contacts are provided by residues 151 to 153 (DIE), 191 to 196 (KTKPTQ), and K227. UTP-binding positions include 191–196 (KTKPTQ) and K227. Positions 303–533 (YVELEDSYIS…FLRAALERSR (231 aa)) constitute a Glutamine amidotransferase type-1 domain. G355 contributes to the L-glutamine binding site. The active-site Nucleophile; for glutamine hydrolysis is C382. L-glutamine-binding positions include 383–386 (LGMQ), E405, and R462. Catalysis depends on residues H507 and E509.

It belongs to the CTP synthase family. In terms of assembly, homotetramer.

The enzyme catalyses UTP + L-glutamine + ATP + H2O = CTP + L-glutamate + ADP + phosphate + 2 H(+). The catalysed reaction is L-glutamine + H2O = L-glutamate + NH4(+). It carries out the reaction UTP + NH4(+) + ATP = CTP + ADP + phosphate + 2 H(+). Its pathway is pyrimidine metabolism; CTP biosynthesis via de novo pathway; CTP from UDP: step 2/2. Allosterically activated by GTP, when glutamine is the substrate; GTP has no effect on the reaction when ammonia is the substrate. The allosteric effector GTP functions by stabilizing the protein conformation that binds the tetrahedral intermediate(s) formed during glutamine hydrolysis. Inhibited by the product CTP, via allosteric rather than competitive inhibition. Catalyzes the ATP-dependent amination of UTP to CTP with either L-glutamine or ammonia as the source of nitrogen. Regulates intracellular CTP levels through interactions with the four ribonucleotide triphosphates. The protein is CTP synthase of Methanothermobacter thermautotrophicus (strain ATCC 29096 / DSM 1053 / JCM 10044 / NBRC 100330 / Delta H) (Methanobacterium thermoautotrophicum).